Consider the following 256-residue polypeptide: MKNLNLYHFFDCKDRKITMYRLTEKGERIRDMFSDIAPRYDFLNRLLSFGVDRRWRRNAVKCIRWSEGGRVLDVATGTGDVALEIARQTPPSVAIVGVDFSEGMVALGRDKVAGSPYAGRITMEIAPCEAIPFPDDTFDSVTIAFGIRNVVDRSQGLSEMLRVLKPGGRAVILEFSTPRSRLFKRIYSFYFLRVLPVIGGLFSQFGAYKYLPDSVLEFPSQEEFKALMASVGFRDTAHRDQTFGIATIYTGEKGLK.

Residues Thr78 and Asp99 each contribute to the S-adenosyl-L-methionine site.

It belongs to the class I-like SAM-binding methyltransferase superfamily. MenG/UbiE family.

It catalyses the reaction a 2-demethylmenaquinol + S-adenosyl-L-methionine = a menaquinol + S-adenosyl-L-homocysteine + H(+). The catalysed reaction is a 2-methoxy-6-(all-trans-polyprenyl)benzene-1,4-diol + S-adenosyl-L-methionine = a 5-methoxy-2-methyl-3-(all-trans-polyprenyl)benzene-1,4-diol + S-adenosyl-L-homocysteine + H(+). It functions in the pathway quinol/quinone metabolism; menaquinone biosynthesis; menaquinol from 1,4-dihydroxy-2-naphthoate: step 2/2. The protein operates within cofactor biosynthesis; ubiquinone biosynthesis. Its function is as follows. Methyltransferase required for the conversion of demethylmenaquinol (DMKH2) to menaquinol (MKH2) and the conversion of 2-polyprenyl-6-methoxy-1,4-benzoquinol (DDMQH2) to 2-polyprenyl-3-methyl-6-methoxy-1,4-benzoquinol (DMQH2). This is Ubiquinone/menaquinone biosynthesis C-methyltransferase UbiE from Geobacter sulfurreducens (strain ATCC 51573 / DSM 12127 / PCA).